The sequence spans 430 residues: Protein arginine methyltransferase NDUFAF7, mitochondrial (430 aa).

The N-terminal 31 residues, 1 to 31 (MSGLARLRKTAFLMVSASANCRIQRYQSSRT), are a transit peptide targeting the mitochondrion.

It belongs to the NDUFAF7 family.

The protein resides in the mitochondrion. The catalysed reaction is L-arginyl-[protein] + 2 S-adenosyl-L-methionine = N(omega),N(omega)'-dimethyl-L-arginyl-[protein] + 2 S-adenosyl-L-homocysteine + 2 H(+). Its function is as follows. Arginine methyltransferase involved in the assembly or stability of mitochondrial NADH:ubiquinone oxidoreductase complex (complex I). Acts by mediating symmetric dimethylation of 'Arg-118' of ndufs2 after it assembles into the complex I, stabilizing the early intermediate complex. In Xenopus tropicalis (Western clawed frog), this protein is Protein arginine methyltransferase NDUFAF7, mitochondrial.